Reading from the N-terminus, the 1019-residue chain is DNA topoisomerase 1 (1019 aa).

The tract at residues 1 to 160 (MNSIQVKNEP…KTMSITGSGE (160 aa)) is disordered. Residues 46 to 56 (KPLAKRPKVED) are compositionally biased toward basic and acidic residues. Residues 62–78 (PLTSTVSSQNGVQKRSG) are compositionally biased toward polar residues. 2 stretches are compositionally biased toward acidic residues: residues 83–93 (DDNDDDSDSDS) and 107–136 (SDDDEDDDDDDDEGDDDDEEDDDDDDDDDD). Interaction with DNA stretches follow at residues 379–380 (KY), 442–447 (RAGNEK), and 556–558 (SAK). One can recognise a Topo IB-type catalytic domain in the interval 386 to 860 (TSNFKTNSDR…KKVKKEEEEN (475 aa)). A disordered region spans residues 716–737 (EQKGLTGDDGTPKKGKKAKNVE). The active-site O-(3'-phospho-DNA)-tyrosine intermediate is Y822. Disordered regions lie at residues 843 to 890 (GQGK…TGDS) and 940 to 1019 (MRKL…AAVV). The segment covering 854–863 (KKEEEENDIK) has biased composition (basic and acidic residues). The span at 864–879 (PKKKDAKGAASKKRAA) shows a compositional bias: basic residues. Composition is skewed to basic and acidic residues over residues 940 to 950 (MRKLDSAERKG) and 980 to 996 (TSADRKMSKPIKAVDKT). The segment covering 997–1012 (EESDDDLSSDSSDDED) has biased composition (acidic residues).

It belongs to the type IB topoisomerase family. Monomer.

The catalysed reaction is ATP-independent breakage of single-stranded DNA, followed by passage and rejoining.. Functionally, releases the supercoiling and torsional tension of DNA introduced during the DNA replication and transcription by transiently cleaving and rejoining one strand of the DNA duplex. Introduces a single-strand break via transesterification at a target site in duplex DNA. The scissile phosphodiester is attacked by the catalytic tyrosine of the enzyme, resulting in the formation of a DNA-(3'-phosphotyrosyl)-enzyme intermediate and the expulsion of a 5'-OH DNA strand. The free DNA strand then rotates around the intact phosphodiester bond on the opposing strand, thus removing DNA supercoils. Finally, in the religation step, the DNA 5'-OH attacks the covalent intermediate to expel the active-site tyrosine and restore the DNA phosphodiester backbone. The protein is DNA topoisomerase 1 (TOP1) of Mycosarcoma maydis (Corn smut fungus).